A 77-amino-acid chain; its full sequence is Translational regulator CsrA (77 aa).

The protein belongs to the CsrA/RsmA family. In terms of assembly, homodimer; the beta-strands of each monomer intercalate to form a hydrophobic core, while the alpha-helices form wings that extend away from the core.

The protein resides in the cytoplasm. Its function is as follows. A translational regulator that binds mRNA to regulate translation initiation and/or mRNA stability. Usually binds in the 5'-UTR at or near the Shine-Dalgarno sequence preventing ribosome-binding, thus repressing translation. Its main target seems to be the major flagellin gene, while its function is anatagonized by FliW. In Pseudarthrobacter chlorophenolicus (strain ATCC 700700 / DSM 12829 / CIP 107037 / JCM 12360 / KCTC 9906 / NCIMB 13794 / A6) (Arthrobacter chlorophenolicus), this protein is Translational regulator CsrA.